The sequence spans 122 residues: Glycine cleavage system H protein (122 aa).

The 83-residue stretch at 19-101 folds into the Lipoyl-binding domain; sequence MVTVGVTHYA…ETEGWLWKMT (83 aa). Position 60 is an N6-lipoyllysine (Lys-60).

It belongs to the GcvH family. The glycine cleavage system is composed of four proteins: P, T, L and H. Requires (R)-lipoate as cofactor.

In terms of biological role, the glycine cleavage system catalyzes the degradation of glycine. The H protein shuttles the methylamine group of glycine from the P protein to the T protein. The chain is Glycine cleavage system H protein from Bartonella tribocorum (strain CIP 105476 / IBS 506).